The following is a 302-amino-acid chain: CASP-like protein 4A2 (302 aa).

A compositionally biased stretch (polar residues) spans 1–13; that stretch reads MALQAQQQATPSP. The segment at 1-134 is disordered; it reads MALQAQQQAT…APPPHAQVRS (134 aa). Over 1–154 the chain is Cytoplasmic; the sequence is MALQAQQQAT…RKRRAAVMQR (154 aa). Residues 40–60 show a composition bias toward low complexity; the sequence is VVVASTHHAAAAARYVPPRAT. A compositionally biased stretch (pro residues) spans 99–129; sequence KTPPPAPPLPAAPPPPPAASPAPAPRAPPPH. Residues 155–175 form a helical membrane-spanning segment; sequence AALLARAAAAGLCLAALAVLA. At 176-197 the chain is on the extracellular side; the sequence is SDTRRGWARDSYSNYAQFRYSE. A helical transmembrane segment spans residues 198–218; it reads AVNVVGFLYSVFQFVALAELM. The Cytoplasmic segment spans residues 219–238; sequence RRNKHLIPHPKRDLFDFTMD. The chain crosses the membrane as a helical span at residues 239-256; sequence QVVAYLLISSSSSATARA. Over 257 to 273 the chain is Extracellular; sequence SDLIENWGSDSFPSMAN. A helical transmembrane segment spans residues 274–294; sequence GSIAISFVAFVVFAICSLISA. The Cytoplasmic segment spans residues 295-302; it reads YNLFRRDM.

The protein belongs to the Casparian strip membrane proteins (CASP) family. In terms of assembly, homodimer and heterodimers.

It localises to the cell membrane. The polypeptide is CASP-like protein 4A2 (Zea mays (Maize)).